The following is a 218-amino-acid chain: Leucine-rich repeat protein 2 (218 aa).

The signal sequence occupies residues 1–27 (MVAQNSRRELLAASLILTLALIRLTEA). LRR repeat units follow at residues 69–93 (HHQVTRLDLGNSNLSGHLVPELGKL), 94–117 (EHLQYLELYKNEIQGTIPSELGNL), 119–141 (SLISLDLYNNNLTGKIPSSLGKL), 142–165 (KSLVFLRLNENRLTGPIPRELTVI), and 167–190 (SLKVVDVSGNDLCGTIPVEGPFEH).

Functionally, probably involved in plant defense response. This chain is Leucine-rich repeat protein 2, found in Arabidopsis thaliana (Mouse-ear cress).